Here is a 287-residue protein sequence, read N- to C-terminus: Small ribosomal subunit protein uS3 (287 aa).

Residues 38–106 (IRRLLATGLE…QVQLNILEVK (69 aa)) enclose the KH type-2 domain. Residues 216-287 (AAAPAGADRP…AETTTQNPGS (72 aa)) form a disordered region. Residues 238-287 (SGASGTTATSTDAGRAASGTQEAPAAAEAAAGTEAAAGAAAETTTQNPGS) show a composition bias toward low complexity.

Belongs to the universal ribosomal protein uS3 family. As to quaternary structure, part of the 30S ribosomal subunit. Forms a tight complex with proteins S10 and S14.

In terms of biological role, binds the lower part of the 30S subunit head. Binds mRNA in the 70S ribosome, positioning it for translation. The chain is Small ribosomal subunit protein uS3 from Mycobacterium sp. (strain JLS).